Consider the following 37-residue polypeptide: Large ribosomal subunit protein bL36 (37 aa).

The protein belongs to the bacterial ribosomal protein bL36 family.

The polypeptide is Large ribosomal subunit protein bL36 (Moorella thermoacetica (strain ATCC 39073 / JCM 9320)).